Reading from the N-terminus, the 218-residue chain is Adenylate kinase (218 aa).

ATP is bound at residue 10–15 (GAGKGT). The tract at residues 30-59 (STGDMLRNAAKEGKPLGLEAKKIMDAGQLV) is NMP. Residues Thr-31, Arg-36, 57-59 (QLV), 85-88 (GFPR), and Gln-92 each bind AMP. An LID region spans residues 122 to 159 (GRRVHLASGRSYHVMFNPPKQEGLDDATGEPLVQRADD). ATP is bound by residues Arg-123 and 132-133 (SY). AMP is bound by residues Arg-156 and Arg-167. An ATP-binding site is contributed by Gly-203.

Belongs to the adenylate kinase family. In terms of assembly, monomer.

Its subcellular location is the cytoplasm. The catalysed reaction is AMP + ATP = 2 ADP. Its pathway is purine metabolism; AMP biosynthesis via salvage pathway; AMP from ADP: step 1/1. Catalyzes the reversible transfer of the terminal phosphate group between ATP and AMP. Plays an important role in cellular energy homeostasis and in adenine nucleotide metabolism. The protein is Adenylate kinase of Chlorobium chlorochromatii (strain CaD3).